The primary structure comprises 576 residues: Aspartate--tRNA ligase (576 aa).

Residue Glu-170 participates in L-aspartate binding. Residues 194–197 form an aspartate region; that stretch reads QLFK. Arg-216 provides a ligand contact to L-aspartate. ATP-binding positions include 216–218 and Gln-225; that span reads RDE. L-aspartate is bound at residue His-438. Glu-471 serves as a coordination point for ATP. An L-aspartate-binding site is contributed by Arg-478. 523-526 provides a ligand contact to ATP; the sequence is GLDR.

The protein belongs to the class-II aminoacyl-tRNA synthetase family. Type 1 subfamily. As to quaternary structure, homodimer.

It is found in the cytoplasm. The catalysed reaction is tRNA(Asp) + L-aspartate + ATP = L-aspartyl-tRNA(Asp) + AMP + diphosphate. Functionally, catalyzes the attachment of L-aspartate to tRNA(Asp) in a two-step reaction: L-aspartate is first activated by ATP to form Asp-AMP and then transferred to the acceptor end of tRNA(Asp). This chain is Aspartate--tRNA ligase, found in Fervidobacterium nodosum (strain ATCC 35602 / DSM 5306 / Rt17-B1).